Consider the following 2025-residue polypeptide: E3 ubiquitin-protein ligase TTC3 (2025 aa).

The interaction with POLG stretch occupies residues 1 to 230 (MDNFAEGDFT…TQSCMDCIEE (230 aa)). TPR repeat units lie at residues 231–264 (GELMKMKGNEEFSKERFDIAIIYYTRAIEYRPEN) and 266–298 (LLYGNRALCFLRTGQFRNALGDGKRATILKNTW). Position 378 is a phosphoserine; by PKB/AKT2 (S378). The interval 423-458 (DCHPEFSPPSSQPPKHKGKQKSRNNESEKFSSSSPL) is disordered. TPR repeat units follow at residues 536–572 (VLVVYGLAISLLGIGQPEELSEAENQFKRIIEHYPSE) and 576–609 (CLAYCGIGKVYLKKNRFLEALNHFEKARTLIYRL). The tract at residues 786–805 (ERMEEDLRESNPPKNEEQKE) is disordered. Positions 793–805 (RESNPPKNEEQKE) are enriched in basic and acidic residues. Residue S1009 is modified to Phosphoserine. Disordered regions lie at residues 1012-1068 (APFS…GPFA), 1215-1295 (KPDV…SCNS), 1773-1842 (DPSV…SPKK), and 1894-1944 (ILDE…QKAE). The span at 1019 to 1029 (VKNKSKKKKPK) shows a compositional bias: basic residues. Polar residues predominate over residues 1038-1052 (SGTTSVTSNNEIITS). A Phosphoserine modification is found at S1061. Basic and acidic residues predominate over residues 1894–1912 (ILDEQKKKKPNPGKDKRTY). The segment covering 1913–1928 (EPSSATPVTRSSQGSP) has biased composition (polar residues). The RING-type zinc finger occupies 1957–1997 (CEICHEVFKSKNVRVLKCGHKYHKGCFKQWLKGQSACPACQ). A disordered region spans residues 2004-2025 (EESPSGRGWPSQNQELPSCSSR). Polar residues predominate over residues 2013–2025 (PSQNQELPSCSSR).

As to quaternary structure, interacts (when phosphorylated on Ser-378) with AKT1, AKT2 and AKT3 (when phosphorylated). Interacts with CIT. Interacts with POLG. Interacts with HSP70. Interacts with SMURF2. In terms of processing, phosphorylation on Ser-378 by Akt is required for ubiquitin ligase activity. Proteolytically cleaved into differently sized N- and C-terminal fragments. As to expression, found in all tissues examined.

The protein resides in the nucleus. Its subcellular location is the cytoplasm. It is found in the golgi apparatus. It catalyses the reaction S-ubiquitinyl-[E2 ubiquitin-conjugating enzyme]-L-cysteine + [acceptor protein]-L-lysine = [E2 ubiquitin-conjugating enzyme]-L-cysteine + N(6)-ubiquitinyl-[acceptor protein]-L-lysine.. It participates in protein modification; protein ubiquitination. E3 ubiquitin-protein ligase which catalyzes the formation of 'Lys-48'-polyubiquitin chains. Mediates the ubiquitination and subsequent degradation of phosphorylated Akt (AKT1, AKT2 and AKT3) in the nucleus. Acts as a terminal regulator of Akt signaling after activation; its phosphorylation by Akt, which is a prerequisite for ubiquitin ligase activity, suggests the existence of a regulation mechanism required to control Akt levels after activation. Positively regulates TGFB1-induced epithelial-mesenchymal transition and myofibroblast differentiation by mediating the ubiquitination and subsequent degradation of SMURF2. Regulates neuronal differentiation by regulating actin remodeling and Golgi organization via a signaling cascade involving RHOA, CIT and ROCK. Inhibits cell proliferation. The sequence is that of E3 ubiquitin-protein ligase TTC3 (TTC3) from Homo sapiens (Human).